Reading from the N-terminus, the 163-residue chain is uncharacterized protein (163 aa).

Topologically, residues 1–33 (MKTLDKITNYDLFDFADEFLKFVPVFRPNPTVT) are cytoplasmic. The chain crosses the membrane as a helical span at residues 34–54 (CLFGNPLTNLLVNGTGAACFF). The Extracellular portion of the chain corresponds to 55–117 (EFCSLALIKV…SLGMALPDDD (63 aa)). A helical membrane pass occupies residues 118 to 138 (VLLSITFWFLCNSSFSILFVF). At 139-163 (ELRIFLRTVNNLLVVFLSVLKRNDL) the chain is on the cytoplasmic side.

The protein resides in the membrane. This is an uncharacterized protein from Saccharomyces cerevisiae (strain ATCC 204508 / S288c) (Baker's yeast).